A 49-amino-acid polypeptide reads, in one-letter code: Large ribosomal subunit protein bL33B (49 aa).

Belongs to the bacterial ribosomal protein bL33 family.

The chain is Large ribosomal subunit protein bL33B from Geobacillus thermodenitrificans (strain NG80-2).